The chain runs to 188 residues: Threonylcarbamoyl-AMP synthase (188 aa).

Positions 3-188 constitute a YrdC-like domain; sequence QLHPSDIKDI…RSGKILRNGQ (186 aa).

This sequence belongs to the SUA5 family. TsaC subfamily.

It is found in the cytoplasm. The catalysed reaction is L-threonine + hydrogencarbonate + ATP = L-threonylcarbamoyladenylate + diphosphate + H2O. Required for the formation of a threonylcarbamoyl group on adenosine at position 37 (t(6)A37) in tRNAs that read codons beginning with adenine. Catalyzes the conversion of L-threonine, HCO(3)(-)/CO(2) and ATP to give threonylcarbamoyl-AMP (TC-AMP) as the acyladenylate intermediate, with the release of diphosphate. The chain is Threonylcarbamoyl-AMP synthase from Shewanella putrefaciens (strain CN-32 / ATCC BAA-453).